The following is a 299-amino-acid chain: Oxygen-dependent coproporphyrinogen-III oxidase (299 aa).

Serine 92 is a substrate binding site. A divalent metal cation is bound by residues histidine 96 and histidine 106. Histidine 106 serves as the catalytic Proton donor. 108–110 (NVR) lines the substrate pocket. The a divalent metal cation site is built by histidine 145 and histidine 175. An important for dimerization region spans residues 240–275 (YVEFNLVWDRGTLFGLQTGGRTESILMSMPPLVRWE). Position 258–260 (258–260 (GGR)) interacts with substrate.

Belongs to the aerobic coproporphyrinogen-III oxidase family. In terms of assembly, homodimer. Requires a divalent metal cation as cofactor.

The protein localises to the cytoplasm. It catalyses the reaction coproporphyrinogen III + O2 + 2 H(+) = protoporphyrinogen IX + 2 CO2 + 2 H2O. The protein operates within porphyrin-containing compound metabolism; protoporphyrin-IX biosynthesis; protoporphyrinogen-IX from coproporphyrinogen-III (O2 route): step 1/1. Its function is as follows. Involved in the heme biosynthesis. Catalyzes the aerobic oxidative decarboxylation of propionate groups of rings A and B of coproporphyrinogen-III to yield the vinyl groups in protoporphyrinogen-IX. In Salmonella dublin (strain CT_02021853), this protein is Oxygen-dependent coproporphyrinogen-III oxidase.